We begin with the raw amino-acid sequence, 21 residues long: Cupiennin-6b (21 aa).

A Serine amide modification is found at Ser-21.

Expressed by the venom gland.

The protein resides in the secreted. The sequence is that of Cupiennin-6b from Cupiennius salei (American wandering spider).